The primary structure comprises 379 residues: Queuine tRNA-ribosyltransferase (379 aa).

Residue aspartate 95 is the Proton acceptor of the active site. Residues 95 to 99 (DSGGF), aspartate 149, glutamine 197, and glycine 224 each bind substrate. The tract at residues 255-261 (GVGMPAE) is RNA binding. Residue aspartate 274 is the Nucleophile of the active site. Zn(2+) is bound by residues cysteine 312, cysteine 314, cysteine 317, and histidine 343.

The protein belongs to the queuine tRNA-ribosyltransferase family. In terms of assembly, homodimer. Within each dimer, one monomer is responsible for RNA recognition and catalysis, while the other monomer binds to the replacement base PreQ1. It depends on Zn(2+) as a cofactor.

It carries out the reaction 7-aminomethyl-7-carbaguanine + guanosine(34) in tRNA = 7-aminomethyl-7-carbaguanosine(34) in tRNA + guanine. It functions in the pathway tRNA modification; tRNA-queuosine biosynthesis. Catalyzes the base-exchange of a guanine (G) residue with the queuine precursor 7-aminomethyl-7-deazaguanine (PreQ1) at position 34 (anticodon wobble position) in tRNAs with GU(N) anticodons (tRNA-Asp, -Asn, -His and -Tyr). Catalysis occurs through a double-displacement mechanism. The nucleophile active site attacks the C1' of nucleotide 34 to detach the guanine base from the RNA, forming a covalent enzyme-RNA intermediate. The proton acceptor active site deprotonates the incoming PreQ1, allowing a nucleophilic attack on the C1' of the ribose to form the product. After dissociation, two additional enzymatic reactions on the tRNA convert PreQ1 to queuine (Q), resulting in the hypermodified nucleoside queuosine (7-(((4,5-cis-dihydroxy-2-cyclopenten-1-yl)amino)methyl)-7-deazaguanosine). In Solibacter usitatus (strain Ellin6076), this protein is Queuine tRNA-ribosyltransferase.